The following is a 505-amino-acid chain: Probable cytosol aminopeptidase (505 aa).

Mn(2+)-binding residues include lysine 269 and aspartate 274. Lysine 281 is an active-site residue. Residues aspartate 292, aspartate 351, and glutamate 353 each coordinate Mn(2+). The active site involves arginine 355.

It belongs to the peptidase M17 family. Requires Mn(2+) as cofactor.

It localises to the cytoplasm. The catalysed reaction is Release of an N-terminal amino acid, Xaa-|-Yaa-, in which Xaa is preferably Leu, but may be other amino acids including Pro although not Arg or Lys, and Yaa may be Pro. Amino acid amides and methyl esters are also readily hydrolyzed, but rates on arylamides are exceedingly low.. It catalyses the reaction Release of an N-terminal amino acid, preferentially leucine, but not glutamic or aspartic acids.. Its function is as follows. Presumably involved in the processing and regular turnover of intracellular proteins. Catalyzes the removal of unsubstituted N-terminal amino acids from various peptides. The chain is Probable cytosol aminopeptidase from Rhodococcus opacus (strain B4).